A 500-amino-acid chain; its full sequence is Catalase (500 aa).

Residues His59 and Asn131 contribute to the active site. Tyr339 provides a ligand contact to heme.

It belongs to the catalase family. The cofactor is heme.

The enzyme catalyses 2 H2O2 = O2 + 2 H2O. Decomposes hydrogen peroxide into water and oxygen; serves to protect cells from the toxic effects of hydrogen peroxide. This is Catalase (katA) from Neisseria gonorrhoeae.